The sequence spans 202 residues: Small ribosomal subunit protein uS5 (202 aa).

In terms of domain architecture, S5 DRBM spans 46–109 (LKSEVLSVGF…RRAKLNIVPV (64 aa)).

It belongs to the universal ribosomal protein uS5 family. Part of the 30S ribosomal subunit. Contacts protein S4.

With S4 and S12 plays an important role in translational accuracy. The protein is Small ribosomal subunit protein uS5 of Thermofilum pendens (strain DSM 2475 / Hrk 5).